Here is a 362-residue protein sequence, read N- to C-terminus: Isopentenyl-diphosphate delta-isomerase (362 aa).

5–6 is a substrate binding site; it reads RK. FMN contacts are provided by residues 63 to 65, serine 93, and asparagine 122; that span reads AMT. Glutamine 152 is a substrate binding site. Glutamate 153 is a Mg(2+) binding site. FMN is bound by residues lysine 184, threonine 214, 259 to 261, and 280 to 281; these read GIR and AG.

The protein belongs to the IPP isomerase type 2 family. As to quaternary structure, homooctamer. Dimer of tetramers. Requires FMN as cofactor. NADPH is required as a cofactor. It depends on Mg(2+) as a cofactor.

Its subcellular location is the cytoplasm. The catalysed reaction is isopentenyl diphosphate = dimethylallyl diphosphate. Functionally, involved in the biosynthesis of isoprenoids. Catalyzes the 1,3-allylic rearrangement of the homoallylic substrate isopentenyl (IPP) to its allylic isomer, dimethylallyl diphosphate (DMAPP). The polypeptide is Isopentenyl-diphosphate delta-isomerase (Nocardia farcinica (strain IFM 10152)).